A 1359-amino-acid chain; its full sequence is Nuclear protein STH1/NPS1 (1359 aa).

Residue Ser-38 is modified to Phosphoserine. Residues 307-383 form the HSA domain; the sequence is LERQQLLEKR…AKQRLAALKS (77 aa). The Helicase ATP-binding domain occupies 482–647; the sequence is VSLYNNHLNG…WALLNFVLPK (166 aa). 495–502 is a binding site for ATP; that stretch reads DEMGLGKT. The DEGH box motif lies at 597 to 600; the sequence is DEGH. One can recognise a Helicase C-terminal domain in the interval 795–956; the sequence is LLDRVLPKFK…NKSTAEEQEA (162 aa). Positions 1090 to 1246 are disordered; that stretch reads RERRRLRQNG…TAAKKTKTKS (157 aa). Polar residues predominate over residues 1108–1126; sequence LENTPEASETSLIENNSFT. Composition is skewed to basic residues over residues 1143–1154 and 1198–1210; these read RSKRRSSRKKRT and KKKKPKLTVKIKL. Basic and acidic residues predominate over residues 1219–1232; it reads NDGKRAEEKPESKS. A compositionally biased stretch (basic residues) spans 1233–1246; the sequence is PAKKTAAKKTKTKS. The Bromo domain occupies 1257–1357; the sequence is KLVEEMREQL…EFTDEWFKEH (101 aa).

The protein belongs to the SNF2/RAD54 helicase family. Interacts directly with SFH1, CSE4, histones H3, H4 and H2B, and via its N-terminus, with RSC8. Interacts with LDB7, NPL6 and RTT102. Component of the two forms of the RSC complex composed of at least either RSC1 or RSC2, and ARP7, ARP9, LDB7, NPL6, RSC3, RSC30, RSC4, RSC58, RSC6, RSC8, RSC9, SFH1, STH1, HTL1 and probably RTT102. The complexes interact with histone and histone variant components of centromeric chromatin.

Its subcellular location is the nucleus. The enzyme catalyses ATP + H2O = ADP + phosphate + H(+). Its function is as follows. Catalytic component of the chromatin structure-remodeling complex (RSC), which is involved in transcription regulation and nucleosome positioning. RSC is responsible for the transfer of a histone octamer from a nucleosome core particle to naked DNA. The reaction requires ATP and involves an activated RSC-nucleosome intermediate. Remodeling reaction also involves DNA translocation, DNA twist and conformational change. As a reconfigurer of centromeric and flanking nucleosomes, RSC complex is required both for proper kinetochore function in chromosome segregation and, via a PKC1-dependent signaling pathway, for organization of the cellular cytoskeleton. This subunit is the essential ATPase of the complex. It is a DNA translocase capable of nucleosome remodeling. Required for full expression of early meiotic genes. Essential for mitotic growth and repression of CHA1 expression. Also involved in G2 phase control. The chain is Nuclear protein STH1/NPS1 (STH1) from Saccharomyces cerevisiae (strain ATCC 204508 / S288c) (Baker's yeast).